Reading from the N-terminus, the 106-residue chain is Large ribosomal subunit protein eL42 (106 aa).

Positions 26–53 are disordered; the sequence is YKKGKDSLYAQGKRRYDRKQSGYGGQTK.

This sequence belongs to the eukaryotic ribosomal protein eL42 family. Component of the large ribosomal subunit.

It localises to the cytoplasm. Its function is as follows. Component of the large ribosomal subunit. The ribosome is a large ribonucleoprotein complex responsible for the synthesis of proteins in the cell. This chain is Large ribosomal subunit protein eL42 (rpl36a), found in Danio rerio (Zebrafish).